Here is a 205-residue protein sequence, read N- to C-terminus: Small ribosomal subunit protein uS4 (205 aa).

The tract at residues 18–46 (NIWGRPKSPVNRREYGPGQHGQRRKGKLS) is disordered. The S4 RNA-binding domain occupies 94-157 (RRLDTVVYRA…KQLTFVLEAN (64 aa)).

Belongs to the universal ribosomal protein uS4 family. Part of the 30S ribosomal subunit. Contacts protein S5. The interaction surface between S4 and S5 is involved in control of translational fidelity.

Functionally, one of the primary rRNA binding proteins, it binds directly to 16S rRNA where it nucleates assembly of the body of the 30S subunit. In terms of biological role, with S5 and S12 plays an important role in translational accuracy. This is Small ribosomal subunit protein uS4 from Rhodopseudomonas palustris (strain BisB18).